Reading from the N-terminus, the 240-residue chain is 4-hydroxy-tetrahydrodipicolinate reductase (240 aa).

NAD(+) contacts are provided by residues 79 to 81 (ATT) and 103 to 106 (SANM). H135 acts as the Proton donor/acceptor in catalysis. A (S)-2,3,4,5-tetrahydrodipicolinate-binding site is contributed by H136. Residue K139 is the Proton donor of the active site. 145 to 146 (GT) serves as a coordination point for (S)-2,3,4,5-tetrahydrodipicolinate.

This sequence belongs to the DapB family.

The protein localises to the cytoplasm. It carries out the reaction (S)-2,3,4,5-tetrahydrodipicolinate + NAD(+) + H2O = (2S,4S)-4-hydroxy-2,3,4,5-tetrahydrodipicolinate + NADH + H(+). It catalyses the reaction (S)-2,3,4,5-tetrahydrodipicolinate + NADP(+) + H2O = (2S,4S)-4-hydroxy-2,3,4,5-tetrahydrodipicolinate + NADPH + H(+). The protein operates within amino-acid biosynthesis; L-lysine biosynthesis via DAP pathway; (S)-tetrahydrodipicolinate from L-aspartate: step 4/4. In terms of biological role, catalyzes the conversion of 4-hydroxy-tetrahydrodipicolinate (HTPA) to tetrahydrodipicolinate. The chain is 4-hydroxy-tetrahydrodipicolinate reductase from Staphylococcus aureus (strain USA300).